The chain runs to 162 residues: Putative 4-hydroxy-4-methyl-2-oxoglutarate aldolase (162 aa).

Residues 75–78 (GDML) and Arg-97 contribute to the substrate site. Asp-98 provides a ligand contact to a divalent metal cation.

Belongs to the class II aldolase/RraA-like family. As to quaternary structure, homotrimer. A divalent metal cation serves as cofactor.

The catalysed reaction is 4-hydroxy-4-methyl-2-oxoglutarate = 2 pyruvate. It catalyses the reaction oxaloacetate + H(+) = pyruvate + CO2. Its function is as follows. Catalyzes the aldol cleavage of 4-hydroxy-4-methyl-2-oxoglutarate (HMG) into 2 molecules of pyruvate. Also contains a secondary oxaloacetate (OAA) decarboxylase activity due to the common pyruvate enolate transition state formed following C-C bond cleavage in the retro-aldol and decarboxylation reactions. This Stutzerimonas stutzeri (strain A1501) (Pseudomonas stutzeri) protein is Putative 4-hydroxy-4-methyl-2-oxoglutarate aldolase.